A 218-amino-acid chain; its full sequence is Ribonuclease S-7 (218 aa).

Positions 1–22 (MLNSPLTSVLFVLLFVLSPIYG) are cleaved as a signal peptide. An RNA-binding site is contributed by Gln32. Cys38 and Cys43 are disulfide-bonded. Asn49 is a glycosylation site (N-linked (GlcNAc...) asparagine). His53 lines the RNA pocket. His53 serves as the catalytic Proton donor. N-linked (GlcNAc...) asparagine glycosylation is present at Asn59. Cys67 and Cys116 are disulfide-bonded. RNA is bound by residues 91-92 (DL), Phe105, 108-109 (HE), and 112-113 (KH). Glu109 is a catalytic residue. His113 (proton acceptor) is an active-site residue. Asn162 is a glycosylation site (N-linked (GlcNAc...) asparagine). Intrachain disulfides connect Cys177–Cys207 and Cys190–Cys201.

Belongs to the RNase T2 family.

Its subcellular location is the secreted. The protein resides in the extracellular space. The catalysed reaction is a ribonucleotidyl-ribonucleotide-RNA + H2O = a 3'-end 3'-phospho-ribonucleotide-RNA + a 5'-end dephospho-ribonucleoside-RNA + H(+). Its function is as follows. Self-incompatibility (SI) is the inherited ability of a flowering plant to prevent self-fertilization by discriminating between self and non-self pollen during pollination. In many species of the Solanaceae, self-incompatibility is controlled by the single, multiallelic locus S. This stylar glycoprotein is associated with expression of self-incompatibility in potato. This Nicotiana alata (Winged tobacco) protein is Ribonuclease S-7.